Consider the following 461-residue polypeptide: MKNYRTESDSFGEIQIEEKFYWGAQTQRSLENFKIGKQKMPEILIRALAILKKCAAQVNYEFGDLEAKIATSIDKATDRILEGEFEDNFPLVVWQTGSGTQTNMNMNEVIASIANEELTSKKGGKSPVHPNDHVNKGQSSNDSFPTAMHIATVLATKQQLIPALNNLLTSLQDKSKDWDKIIKIGRTHLQDATPLTLKQEFSGYITQIEYALERIEDALKKVYLLAQGGTAVGTAINSKIGFDIKFAEKVAEFTKQPFKTAPNKFESLAAHDALVEFSGTLNTIAVSLMKIANDIRLLGSGPRCGLGELHLPENEPGSSIMPGKVNPTQVEALTMVCSQVMGNHVTVTIAGSNGHLELNVFKPVIIYNILQSIELLSDSVNSFVTHCVKGLEPNIARINDLRDKSLMLVTALNPHIGYDNAAKIAKEAHKHGITLKEAAKKLNLLSEEEFDKIVVPEKMIG.

Residues S98–T100, H129–D132, S139–N141, and T187 each bind substrate. The disordered stretch occupies residues S120–S140. H188 functions as the Proton donor/acceptor in the catalytic mechanism. S318 is an active-site residue. Residues S319 and K324–N326 each bind substrate.

It belongs to the class-II fumarase/aspartase family. Fumarase subfamily. As to quaternary structure, homotetramer.

The protein localises to the cytoplasm. It catalyses the reaction (S)-malate = fumarate + H2O. It participates in carbohydrate metabolism; tricarboxylic acid cycle; (S)-malate from fumarate: step 1/1. Functionally, involved in the TCA cycle. Catalyzes the stereospecific interconversion of fumarate to L-malate. In Rickettsia felis (strain ATCC VR-1525 / URRWXCal2) (Rickettsia azadi), this protein is Fumarate hydratase class II.